The following is a 470-amino-acid chain: Tryptophan synthase beta chain 1, chloroplastic (470 aa).

A compositionally biased stretch (polar residues) spans 1 to 10; the sequence is MAASGTSATF. The interval 1–24 is disordered; it reads MAASGTSATFRASVSSAPSSSSQL. A compositionally biased stretch (low complexity) spans 12-22; that stretch reads ASVSSAPSSSS. At K165 the chain carries N6-(pyridoxal phosphate)lysine.

This sequence belongs to the TrpB family. As to quaternary structure, tetramer of two alpha and two beta chains. It depends on pyridoxal 5'-phosphate as a cofactor.

It localises to the plastid. The protein localises to the chloroplast. It catalyses the reaction (1S,2R)-1-C-(indol-3-yl)glycerol 3-phosphate + L-serine = D-glyceraldehyde 3-phosphate + L-tryptophan + H2O. Its pathway is amino-acid biosynthesis; L-tryptophan biosynthesis; L-tryptophan from chorismate: step 5/5. In terms of biological role, the beta subunit is responsible for the synthesis of L-tryptophan from indole and L-serine. The polypeptide is Tryptophan synthase beta chain 1, chloroplastic (TSB1) (Arabidopsis thaliana (Mouse-ear cress)).